Reading from the N-terminus, the 165-residue chain is Cathelicidin-7 (165 aa).

Residues Met1 to Ala29 form the signal peptide. Positions Gln30–Ser130 are excised as a propeptide. Intrachain disulfides connect Cys86-Cys97 and Cys108-Cys125. Arg164 bears the Arginine amide mark.

Belongs to the cathelicidin family. As to expression, expressed in bone marrow myeloid cells, spleen and testis.

The protein localises to the secreted. Its function is as follows. Exerts a potent antimicrobial activity. The sequence is that of Cathelicidin-7 (CATHL7) from Bos taurus (Bovine).